Reading from the N-terminus, the 448-residue chain is Metacaspase-1 (448 aa).

Residues 1 to 129 form a disordered region; that stretch reads MFPGQGRHTY…GHYSRPPTDS (129 aa). Low complexity predominate over residues 10–44; the sequence is YGGQQSNYSNQQQGYDQGYNQGYGQAYGQEYNQGY. Residues 61-70 show a composition bias toward pro residues; sequence SGPPPGPPPG. Over residues 99-114 the composition is skewed to polar residues; the sequence is YGNNQTRGSGNEQNYG. Active-site residues include H231 and C292.

Belongs to the peptidase C14B family.

Its function is as follows. Involved in cell death (apoptosis). This chain is Metacaspase-1 (MCA1), found in Candida albicans (strain SC5314 / ATCC MYA-2876) (Yeast).